We begin with the raw amino-acid sequence, 690 residues long: BURP domain-containing protein 14 (690 aa).

Positions 1–26 (MAPPRHARLVAATIAVLLCHLPRSAA) are cleaved as a signal peptide. Positions 134-163 (GSSWSKSSSDGDGAAAAAAPAGGGGGGGGG) are disordered. A compositionally biased stretch (low complexity) spans 135–153 (SSWSKSSSDGDGAAAAAAP). The segment covering 154–163 (AGGGGGGGGG) has biased composition (gly residues). The N-linked (GlcNAc...) asparagine glycan is linked to N178. Residues 201-211 (SNGGGGGGGGV) are compositionally biased toward gly residues. A disordered region spans residues 201 to 232 (SNGGGGGGGGVDSFRRYGKGSQGRNDSFTSYE). Residues N225, N317, N379, N432, N450, and N601 are each glycosylated (N-linked (GlcNAc...) asparagine). The BURP domain maps to 477 to 689 (FFRERDLVAG…FQGDMTWTVA (213 aa)).

As to expression, expressed in panicles.

This is BURP domain-containing protein 14 (BURP14) from Oryza sativa subsp. japonica (Rice).